The primary structure comprises 314 residues: Olfactory receptor 5B3 (314 aa).

Residues 1-23 are Extracellular-facing; that stretch reads MENKTEVTQFILLGLTNDSELQV. N-linked (GlcNAc...) asparagine glycans are attached at residues N3 and N17. The helical transmembrane segment at 24–44 threads the bilayer; the sequence is PLFITFPFIYIITLVGNLGII. At 45 to 52 the chain is on the cytoplasmic side; that stretch reads VLIFWDSC. The chain crosses the membrane as a helical span at residues 53 to 73; sequence LHNPMYFFLSNLSLVDFCYSS. Topologically, residues 74-97 are extracellular; it reads AVTPIVMAGFLIEDKVISYNACAA. The cysteines at positions 95 and 187 are disulfide-linked. The helical transmembrane segment at 98-118 threads the bilayer; that stretch reads QMYIFVAFATVENYLLASMAY. The Cytoplasmic segment spans residues 119-131; the sequence is DRYAAVCKPLHYT. Residues 132–152 form a helical membrane-spanning segment; that stretch reads TTMTTTVCARLAIGSYLCGFL. Residue N153 is glycosylated (N-linked (GlcNAc...) asparagine). Topologically, residues 153–194 are extracellular; it reads NASIHTGDTFSLSFCKSNEVHHFFCDIPAVMVLSCSDRHISE. The helical transmembrane segment at 195 to 215 threads the bilayer; the sequence is LVLIYVVSFNIFIALLVILIS. Topologically, residues 216–235 are cytoplasmic; sequence YTFIFITILKMHSASVYQKP. The chain crosses the membrane as a helical span at residues 236 to 256; the sequence is LSTCASHFIAVGIFYGTIIFM. The Extracellular segment spans residues 257–269; it reads YLQPSSSHSMDTD. A helical membrane pass occupies residues 270-290; the sequence is KMAPVFYTMVIPMLNPLVYSL. The Cytoplasmic segment spans residues 291–314; that stretch reads RNKEVKSAFKKVVEKAKLSVGWSV.

This sequence belongs to the G-protein coupled receptor 1 family.

The protein localises to the cell membrane. Odorant receptor. In Homo sapiens (Human), this protein is Olfactory receptor 5B3 (OR5B3).